Reading from the N-terminus, the 764-residue chain is Oxysterol-binding protein-related protein 10 (764 aa).

Positions 1-74 are disordered; the sequence is MERAVQGTDG…PSGGGGRRRE (74 aa). Low complexity-rich tracts occupy residues 15 to 47 and 55 to 65; these read NSSS…SAAA and RSSPGSVAASP. A phosphoserine mark is found at S29 and S30. R38 carries the post-translational modification Omega-N-methylarginine. S57, S60, and S64 each carry phosphoserine. The PH domain maps to 74–171; the sequence is EPALEGVLSK…WVTQLRACAK (98 aa). T196 carries the phosphothreonine modification. 3 positions are modified to phosphoserine: S201, S209, and S223. Disordered stretches follow at residues 304–335 and 354–391; these read GQPS…NGTL and AEDE…TELG. Polar residues predominate over residues 359 to 370; that stretch reads TSQPEPEPNSGS. Over residues 374-389 the composition is skewed to acidic residues; sequence LSEDEKSDNEDKEETE. Residues 413–418 and 477–480 contribute to the a 1,2-diacyl-sn-glycero-3-phospho-(1D-myo-inositol 4-phosphate) site; these read LTKVVL and KPYN. A 1,2-diacyl-sn-glycero-3-phospho-L-serine contacts are provided by residues 413-418 and N480; that span reads LTKVVL. Residues 501 to 520 form a disordered region; the sequence is KRTASRSPASCHEHPMADDP. The segment covering 511 to 520 has biased composition (basic and acidic residues); the sequence is CHEHPMADDP. 535–536 is a binding site for a 1,2-diacyl-sn-glycero-3-phospho-(1D-myo-inositol 4-phosphate); it reads HH. S561 lines the a 1,2-diacyl-sn-glycero-3-phospho-L-serine pocket. The stretch at 713–740 forms a coiled coil; it reads DIDAATEQKRHLEEKQRVEERKRENLRT. A 1,2-diacyl-sn-glycero-3-phospho-(1D-myo-inositol 4-phosphate)-binding residues include K721, E725, and R729.

Belongs to the OSBP family. Interacts with OSBPL9. Interacts with DIAPH1.

It is found in the cytoplasm. Its subcellular location is the cytoskeleton. Probable lipid transporter involved in lipid countertransport between the endoplasmic reticulum and the plasma membrane. Its ability to bind phosphatidylserine, suggests that it specifically exchanges phosphatidylserine with phosphatidylinositol 4-phosphate (PI4P), delivering phosphatidylserine to the plasma membrane in exchange for PI4P. Plays a role in negative regulation of lipid biosynthesis. Negatively regulates APOB secretion from hepatocytes. Binds cholesterol and acidic phospholipids. Also binds 25-hydroxycholesterol. Binds phosphatidylserine. The polypeptide is Oxysterol-binding protein-related protein 10 (OSBPL10) (Homo sapiens (Human)).